A 2752-amino-acid polypeptide reads, in one-letter code: MVFEKENKTCMKDVRYDLQEREKEEEEKKRNYNISNNNNNNNYNKYDKNYISHVADYINRKQINNMNDNNMNKSCIMKRFNKKDVKYNDMLLKADETYINDGQIKKKYNNNNNNNNNNTKSIYLTNTYNKSSSIHNKPHIHKNNDINNIHEKNDKSNNDYNYSHNNISFDYNVEPVYNYINEGHNPDISLNKMEIQKGTYNNYCYENFIVNDDVDSYRDTHENNIMLLDDENNNSIFIKKNKSSFYHTSQHNNQGFINTNDTIKRNKNFVLQKNDINLTNDKINSSFNKKKNKLTSIYVEREDQKVGPLNVNNDMSILNKKKESKHNFYKSMNEHDVIAEKKKNTILKNKCVEDDNIRTIENVHNDSLKNEHMNDIYMKDNNNNINTYKIVHDKPLSAVENLQEVNKKKNYKNVIFKHLFNNDKDDNVYNLKKNKNNDVVEFNMNKKMTLISGNKMYKNETAKMYNSNQEIYISNNNNDNNNDNNNDNNINNYHHGYKKYNTTNQYNNNNNNNNNSNIYPFYKNTSINNCNNKKINEYDNNLFNNKKDILNNTNFVKSQDYHDNKNIQYNINSNDNYYHSFGDIKNEGNMNTMFNVKKKYKKVRINSHISSKLNDKSIINYRNGVINNQFNHMNDIVSSNNNNNNNNNNNNNNNNNNNNNNNNNNNNNNNNNNNINMKTSICNNKKRKNTKNFSLNLCSACLNIDDKIYIKQIKEILDRDINLLNEDPRIINALKKSHISTSYLFNNLKSLGTFRKGGLTWAIYYNNNNKGVNNMIKIKNEANNRIVKDKLLNNMNCTNIMNDIKNINTLATNNGGGYNLNNVNNMSNIYNVVDAKNGNHMNNRKDMSINTDCFNYTNSIDEMDDINENNKKKDNFPFLNNSNIDSDNNYIELIKNNSFCNDKYIIEPIIENTWLKKVLLIIKKESLDIECFLFKIKYYFYKSVLFLYQEGIKSYLGDVANQMKIYINYNFWSAAEIAFILRQITSLCNIQIEVRVKGEIGCVIYLNEEPEWFQGFVDSHNLNDTFSKKDWYLLNNFAIKMMQYRKGDKKSEDMKEDTPTRGENLQRGQNLQRGDNLQRGDNLQRGDNLQRGDNLQNGDNLQNGDNLQRGDNLQNGENLQSGENLQSGENLQSGENLQTRENLQSGENLQTRENLQSDENHNNILYPYNNNGQYEDNYNNSYNNNNNECIFCSSSNKKLKSYMFNGGRYAFAAKLKEEIKHFHSKRLGDIIHLVQLAIHKGIFVYSQRILLPVSACEKSADDLYPKIRNLNYDICETLEEVLEIISLLVDHKTNGLVLAQLKQQFILQFKKELNSLHFGYKKLQNLLMAEPFNKYYKLYIPNNNLHRTHIQHKKYKTPDNCRIFQKENIHLKNHLDFIYNTEFFTELYVEDEYYDNEDTKQSIQPIYDNIISTSCNNHIQQQNGSLYMSNTTFRNDKEEIKKDIYLLNIRDSQNKRDIKQDNISKKKINNINSNNSNNSNSNSNSNNNNNNNYNSNNISDNKLELTYQNIHNLPSYIQKSIETIFEKNNKENDKSKWIEEEEEEKEECPLKEINKNIQHNKNYDYIINNNIFQNRGSNNIQSYDDRNQNKQIQFLNTLYHIDVELSPVNTKRYNKIKDIFTNMIKINKKCNDNIINNDDIIKNDHDEFINDDQHYNIWNVHFEKRTLLNRYKQDNTTGATNVVSPILNIYTLIKKYKIKKKKYESFFDDINNDVDIHVNNKTEQNKDNGHIENNNINNINNNINNINNNINNINNNINNINNNVNNYYYIDNGDGNNIHKGYINNYIIPEDNPIHNNFTYDNNKKNTTKQTLQLLHNTEINFIPDIDPIDVTNVNINRKNKMNKIYKTKNVINRHHTNKSMETFEPNNKLDSYEDRNIQFYNENCNRYMNADYKTGQSTLPILSGTTNNIRYKTGESTLPILSGTTNNTRYKTGESTLPILSGTTNNTRYKTERFFKAKNSNQENINQNEINYNNNDDDDDNNNNNNDDDDDDNNYYMLNNQYGDNIMTESNYISSHNNLPQEDIFNDEKKIIEMIEKTIDQDYINIEDKNDVKHDMIKKINKRKNNNIHNYNDNNNDNNNDNNNDNNNDNNNDNNNDKYFIFDKDINNNVDENNINNIHLKDNIKKKKEKNEYNNYKISSYNNNDGDNYGDNNNNLINNSIYYYDSSKNRSIKYGDEYEEEIYNTKNVINQKNYGNINNYDYNVIFTNIAQVNDENLYIPNSRSINIDINDTDNNNCVKNITYINNNSNPLESNNNGSTTTTTTTTSIKNNMKHYNVDINNLDDIKDIYMYNSNNNDSTNVERDNNNINIEHVGEKPFCYYTHNYNNNVSNINFNTFNPSLNLIMNNPKKNNDQNSIFKKEQYSSYEPVKNNDINIFYSNKYDNNSNYIYEQKIKKNENDVIYKNDDKIFSNLNKSEECVHSSNSFVNNLYIPYNNMKDKDNIMSPQNNIIYDEQINNINNFTLNNHNMNNGHNIGDEYSDESYEIRHINNINKKDNLMDENNILNNNNDNNNNNNDKSNLVLHNNNDKSNHFLHNNNNDSYNYDIYNHFHTYNNCNLYNDDKNELSKKGAVLNRYNEQEQNIPIEHEYNNISYPSLIKNNKNNSEKKYLDNLSINLKDEKNYHPEKKNFNNNLEKNNKIFTNDIEHISFNKKICKIKNIYSENKNNQFFKNNTNHLFNTNINLYEKKNYVDDEFSHHKDPIKFSSLIKNKQNNNNSFMNLLNDNQYVKINNQNTFNNPNKYHHMKNKINK.

Residues 20–30 (EREKEEEEKKR) show a composition bias toward basic and acidic residues. 5 disordered regions span residues 20-44 (EREKEEEEKKRNYNISNNNNNNNYN), 139-160 (HIHKNNDINNIHEKNDKSNNDY), 634-678 (NDIV…INMK), 1048-1130 (DKKS…SGEN), and 1153-1172 (ENLQSDENHNNILYPYNNNG). Positions 32 to 44 (YNISNNNNNNNYN) are enriched in low complexity. A compositionally biased stretch (basic and acidic residues) spans 142–157 (KNNDINNIHEKNDKSN). Residues 640-674 (NNNNNNNNNNNNNNNNNNNNNNNNNNNNNNNNNNN) show a composition bias toward low complexity. The segment covering 1048–1060 (DKKSEDMKEDTPT) has biased composition (basic and acidic residues). Polar residues predominate over residues 1061-1075 (RGENLQRGQNLQRGD). Residues 1076–1090 (NLQRGDNLQRGDNLQ) show a composition bias toward basic and acidic residues. A compositionally biased stretch (polar residues) spans 1091-1130 (RGDNLQNGDNLQNGDNLQRGDNLQNGENLQSGENLQSGEN). The segment covering 1162–1172 (NNILYPYNNNG) has biased composition (low complexity). Residues 1277-1354 (TLEEVLEIIS…LHRTHIQHKK (78 aa)) form the HTH OST-type domain. Disordered stretches follow at residues 1457 to 1499 (DIKQ…NNIS), 1958 to 1999 (AKNS…YYML), 2063 to 2099 (KRKNNNIHNYNDNNNDNNNDNNNDNNNDNNNDNNNDK), and 2501 to 2537 (DENNILNNNNDNNNNNNDKSNLVLHNNNDKSNHFLHN). 2 stretches are compositionally biased toward low complexity: residues 1469 to 1499 (NNINSNNSNNSNSNSNSNNNNNNNYNSNNIS) and 1962 to 1975 (NQENINQNEINYNN). Acidic residues predominate over residues 1976–1994 (NDDDDDNNNNNNDDDDDDN). Low complexity-rich tracts occupy residues 2068 to 2095 (NIHNYNDNNNDNNNDNNNDNNNDNNNDN) and 2501 to 2526 (DENNILNNNNDNNNNNNDKSNLVLHN).

In Plasmodium falciparum (isolate 3D7), this protein is Protein PFF0380w.